Reading from the N-terminus, the 221-residue chain is Uracil-DNA glycosylase 1 (221 aa).

Residue aspartate 61 is the Proton acceptor of the active site.

This sequence belongs to the uracil-DNA glycosylase (UDG) superfamily. UNG family.

Its subcellular location is the cytoplasm. The catalysed reaction is Hydrolyzes single-stranded DNA or mismatched double-stranded DNA and polynucleotides, releasing free uracil.. Excises uracil residues from the DNA which can arise as a result of misincorporation of dUMP residues by DNA polymerase or due to deamination of cytosine. The chain is Uracil-DNA glycosylase 1 from Listeria monocytogenes serotype 4b (strain F2365).